The primary structure comprises 264 residues: Thymidylate synthase (264 aa).

Position 21 (arginine 21) interacts with dUMP. Histidine 51 contributes to the (6R)-5,10-methylene-5,6,7,8-tetrahydrofolate binding site. A dUMP-binding site is contributed by 126–127 (RR). The active-site Nucleophile is the cysteine 146. DUMP-binding positions include 166-169 (RSAD), asparagine 177, and 207-209 (HIY). Aspartate 169 is a binding site for (6R)-5,10-methylene-5,6,7,8-tetrahydrofolate. Position 263 (serine 263) interacts with (6R)-5,10-methylene-5,6,7,8-tetrahydrofolate.

This sequence belongs to the thymidylate synthase family. Bacterial-type ThyA subfamily. As to quaternary structure, homodimer.

The protein resides in the cytoplasm. It catalyses the reaction dUMP + (6R)-5,10-methylene-5,6,7,8-tetrahydrofolate = 7,8-dihydrofolate + dTMP. It functions in the pathway pyrimidine metabolism; dTTP biosynthesis. In terms of biological role, catalyzes the reductive methylation of 2'-deoxyuridine-5'-monophosphate (dUMP) to 2'-deoxythymidine-5'-monophosphate (dTMP) while utilizing 5,10-methylenetetrahydrofolate (mTHF) as the methyl donor and reductant in the reaction, yielding dihydrofolate (DHF) as a by-product. This enzymatic reaction provides an intracellular de novo source of dTMP, an essential precursor for DNA biosynthesis. This is Thymidylate synthase from Phocaeicola vulgatus (strain ATCC 8482 / DSM 1447 / JCM 5826 / CCUG 4940 / NBRC 14291 / NCTC 11154) (Bacteroides vulgatus).